The chain runs to 84 residues: MNLFDFFRASKKVSTASVAKERLQIIVAHERGQRSTPDYLPALQKELVEVIRKYVNIGSDDVHVALENQGSCSILELNITLPDR.

This sequence belongs to the MinE family.

In terms of biological role, prevents the cell division inhibition by proteins MinC and MinD at internal division sites while permitting inhibition at polar sites. This ensures cell division at the proper site by restricting the formation of a division septum at the midpoint of the long axis of the cell. In Pseudomonas fluorescens (strain ATCC BAA-477 / NRRL B-23932 / Pf-5), this protein is Cell division topological specificity factor.